We begin with the raw amino-acid sequence, 459 residues long: ATP-dependent protease ATPase subunit HslU (459 aa).

Residues Val-21, 63–68, Asp-273, Glu-338, and Arg-410 contribute to the ATP site; that span reads GVGKTE.

Belongs to the ClpX chaperone family. HslU subfamily. In terms of assembly, a double ring-shaped homohexamer of HslV is capped on each side by a ring-shaped HslU homohexamer. The assembly of the HslU/HslV complex is dependent on binding of ATP.

It localises to the cytoplasm. ATPase subunit of a proteasome-like degradation complex; this subunit has chaperone activity. The binding of ATP and its subsequent hydrolysis by HslU are essential for unfolding of protein substrates subsequently hydrolyzed by HslV. HslU recognizes the N-terminal part of its protein substrates and unfolds these before they are guided to HslV for hydrolysis. The chain is ATP-dependent protease ATPase subunit HslU from Thermosipho africanus (strain TCF52B).